A 333-amino-acid polypeptide reads, in one-letter code: Anthranilate phosphoribosyltransferase (333 aa).

Residues Gly81, 84–85 (GD), Thr89, 91–94 (NIST), 109–117 (KHGNRSVSS), and Ala121 each bind 5-phospho-alpha-D-ribose 1-diphosphate. Gly81 contacts anthranilate. Residue Ser93 participates in Mg(2+) binding. Anthranilate is bound at residue Asn112. Anthranilate is bound at residue Arg167. Asp225 and Glu226 together coordinate Mg(2+).

It belongs to the anthranilate phosphoribosyltransferase family. In terms of assembly, homodimer. It depends on Mg(2+) as a cofactor.

It carries out the reaction N-(5-phospho-beta-D-ribosyl)anthranilate + diphosphate = 5-phospho-alpha-D-ribose 1-diphosphate + anthranilate. The protein operates within amino-acid biosynthesis; L-tryptophan biosynthesis; L-tryptophan from chorismate: step 2/5. Its function is as follows. Catalyzes the transfer of the phosphoribosyl group of 5-phosphorylribose-1-pyrophosphate (PRPP) to anthranilate to yield N-(5'-phosphoribosyl)-anthranilate (PRA). In Pasteurella multocida (strain Pm70), this protein is Anthranilate phosphoribosyltransferase.